Reading from the N-terminus, the 417-residue chain is Serine hydroxymethyltransferase (417 aa).

(6S)-5,6,7,8-tetrahydrofolate-binding positions include Leu121 and Gly125–Leu127. Lys229 bears the N6-(pyridoxal phosphate)lysine mark. Ser355–Phe357 lines the (6S)-5,6,7,8-tetrahydrofolate pocket.

This sequence belongs to the SHMT family. As to quaternary structure, homodimer. Requires pyridoxal 5'-phosphate as cofactor.

It localises to the cytoplasm. The catalysed reaction is (6R)-5,10-methylene-5,6,7,8-tetrahydrofolate + glycine + H2O = (6S)-5,6,7,8-tetrahydrofolate + L-serine. The protein operates within one-carbon metabolism; tetrahydrofolate interconversion. It participates in amino-acid biosynthesis; glycine biosynthesis; glycine from L-serine: step 1/1. Functionally, catalyzes the reversible interconversion of serine and glycine with tetrahydrofolate (THF) serving as the one-carbon carrier. This reaction serves as the major source of one-carbon groups required for the biosynthesis of purines, thymidylate, methionine, and other important biomolecules. Also exhibits THF-independent aldolase activity toward beta-hydroxyamino acids, producing glycine and aldehydes, via a retro-aldol mechanism. This chain is Serine hydroxymethyltransferase, found in Buchnera aphidicola subsp. Schizaphis graminum (strain Sg).